The following is a 206-amino-acid chain: LexA repressor (206 aa).

The segment at residues 28-48 (VREICNAVGLSSTSTVHGHLS) is a DNA-binding region (H-T-H motif). Residues Ser128 and Lys166 each act as for autocatalytic cleavage activity in the active site.

It belongs to the peptidase S24 family. As to quaternary structure, homodimer.

It carries out the reaction Hydrolysis of Ala-|-Gly bond in repressor LexA.. Functionally, represses a number of genes involved in the response to DNA damage (SOS response), including recA and lexA. In the presence of single-stranded DNA, RecA interacts with LexA causing an autocatalytic cleavage which disrupts the DNA-binding part of LexA, leading to derepression of the SOS regulon and eventually DNA repair. The sequence is that of LexA repressor from Ligilactobacillus salivarius (strain UCC118) (Lactobacillus salivarius).